Reading from the N-terminus, the 125-residue chain is U-scoloptoxin(05)-Sm1a (125 aa).

Residues 1–20 (MNVLYTKIFFILILTRTSSA) form the signal peptide.

This sequence belongs to the scoloptoxin-05 family. Post-translationally, contains 4 disulfide bonds. In terms of tissue distribution, expressed by the venom gland.

It localises to the secreted. This Scolopendra morsitans (Tanzanian blue ringleg centipede) protein is U-scoloptoxin(05)-Sm1a.